The primary structure comprises 253 residues: uncharacterized protein (253 aa).

The protein belongs to the methyltransferase superfamily.

This is an uncharacterized protein from Mycobacterium avium (strain 104).